The chain runs to 500 residues: Lysine--tRNA ligase (500 aa).

Mg(2+)-binding residues include Glu-410 and Glu-417.

This sequence belongs to the class-II aminoacyl-tRNA synthetase family. In terms of assembly, homodimer. Mg(2+) is required as a cofactor.

It localises to the cytoplasm. It catalyses the reaction tRNA(Lys) + L-lysine + ATP = L-lysyl-tRNA(Lys) + AMP + diphosphate. The sequence is that of Lysine--tRNA ligase from Mycoplasma mycoides subsp. mycoides SC (strain CCUG 32753 / NCTC 10114 / PG1).